The following is a 503-amino-acid chain: Cytochrome P450 11B2, mitochondrial (503 aa).

Residues 1-24 constitute a mitochondrion transit peptide; sequence MALRAKAEVCVAAPWLSLQRARAL. Phe-381 contributes to the 21-hydroxyprogesterone binding site. Residue Cys-450 participates in heme binding.

This sequence belongs to the cytochrome P450 family. It depends on heme as a cofactor. In terms of tissue distribution, expressed sporadically in the zona glomerulosa (zG) of the adrenal cortex (conventional zonation), as well as in aldosterone-producing cell clusters (APCCs) composed of morphological zG cells in contact with the capsule (variegated zonation).

Its subcellular location is the mitochondrion inner membrane. The enzyme catalyses a steroid + 2 reduced [adrenodoxin] + O2 + 2 H(+) = an 11beta-hydroxysteroid + 2 oxidized [adrenodoxin] + H2O. The catalysed reaction is 21-hydroxyprogesterone + 2 reduced [adrenodoxin] + O2 + 2 H(+) = corticosterone + 2 oxidized [adrenodoxin] + H2O. It catalyses the reaction corticosterone + 2 reduced [adrenodoxin] + O2 + 2 H(+) = 18-hydroxycorticosterone + 2 oxidized [adrenodoxin] + H2O. It carries out the reaction 18-hydroxycorticosterone + 2 reduced [adrenodoxin] + O2 + 2 H(+) = aldosterone + 2 oxidized [adrenodoxin] + 2 H2O. The enzyme catalyses 11-deoxycortisol + 2 reduced [adrenodoxin] + O2 + 2 H(+) = cortisol + 2 oxidized [adrenodoxin] + H2O. The catalysed reaction is 21-hydroxyprogesterone + 2 reduced [adrenodoxin] + O2 + 2 H(+) = 18-hydroxy-11-deoxycorticosterone + 2 oxidized [adrenodoxin] + H2O. It catalyses the reaction cortisol + 2 reduced [adrenodoxin] + O2 + 2 H(+) = 18-hydroxycortisol + 2 oxidized [adrenodoxin] + H2O. It carries out the reaction 18-hydroxycortisol + 2 reduced [adrenodoxin] + O2 + 2 H(+) = 18-oxocortisol + 2 oxidized [adrenodoxin] + 2 H2O. The protein operates within steroid biosynthesis. Functionally, a cytochrome P450 monooxygenase that catalyzes the biosynthesis of aldosterone, the main mineralocorticoid in the human body responsible for salt and water homeostasis, thus involved in blood pressure regulation, arterial hypertension, and the development of heart failure. Catalyzes three sequential oxidative reactions of 11-deoxycorticosterone (21-hydroxyprogesterone), namely 11-beta hydroxylation, followed by two successive oxidations at C18 yielding 18-hydroxy and then 18-oxo intermediates (that would not leave the enzyme active site during the consecutive hydroxylation reactions), ending with the formation of aldosterone. Can also produce 18-hydroxycortisol and 18-oxocortisol, derived from successive oxidations of cortisol at C18, normally found at very low levels, but significantly increased in primary aldosteronism, the most common form of secondary hypertension. Mechanistically, uses molecular oxygen inserting one oxygen atom into a substrate and reducing the second into a water molecule. Two electrons are provided by NADPH via a two-protein mitochondrial transfer system comprising flavoprotein FDXR (adrenodoxin/ferredoxin reductase) and nonheme iron-sulfur protein FDX1 or FDX2 (adrenodoxin/ferredoxin). Could also be involved in the androgen metabolic pathway. The chain is Cytochrome P450 11B2, mitochondrial from Homo sapiens (Human).